Reading from the N-terminus, the 459-residue chain is Methylenetetrahydrofolate--tRNA-(uracil-5-)-methyltransferase TrmFO (459 aa).

FAD is bound at residue 15 to 20; it reads GAGLAG.

The protein belongs to the MnmG family. TrmFO subfamily. It depends on FAD as a cofactor.

Its subcellular location is the cytoplasm. It carries out the reaction uridine(54) in tRNA + (6R)-5,10-methylene-5,6,7,8-tetrahydrofolate + NADH + H(+) = 5-methyluridine(54) in tRNA + (6S)-5,6,7,8-tetrahydrofolate + NAD(+). The catalysed reaction is uridine(54) in tRNA + (6R)-5,10-methylene-5,6,7,8-tetrahydrofolate + NADPH + H(+) = 5-methyluridine(54) in tRNA + (6S)-5,6,7,8-tetrahydrofolate + NADP(+). Functionally, catalyzes the folate-dependent formation of 5-methyl-uridine at position 54 (M-5-U54) in all tRNAs. This is Methylenetetrahydrofolate--tRNA-(uracil-5-)-methyltransferase TrmFO from Syntrophotalea carbinolica (strain DSM 2380 / NBRC 103641 / GraBd1) (Pelobacter carbinolicus).